The following is a 190-amino-acid chain: Pyridoxal 5'-phosphate synthase subunit PdxT (190 aa).

Gly46–Ser48 lines the L-glutamine pocket. Cys78 (nucleophile) is an active-site residue. Residues Arg108 and Ile137–Arg138 contribute to the L-glutamine site. Residues His174 and Glu176 each act as charge relay system in the active site.

Belongs to the glutaminase PdxT/SNO family. In terms of assembly, in the presence of PdxS, forms a dodecamer of heterodimers. Only shows activity in the heterodimer.

The catalysed reaction is aldehydo-D-ribose 5-phosphate + D-glyceraldehyde 3-phosphate + L-glutamine = pyridoxal 5'-phosphate + L-glutamate + phosphate + 3 H2O + H(+). It carries out the reaction L-glutamine + H2O = L-glutamate + NH4(+). It functions in the pathway cofactor biosynthesis; pyridoxal 5'-phosphate biosynthesis. Catalyzes the hydrolysis of glutamine to glutamate and ammonia as part of the biosynthesis of pyridoxal 5'-phosphate. The resulting ammonia molecule is channeled to the active site of PdxS. This is Pyridoxal 5'-phosphate synthase subunit PdxT from Chloroflexus aurantiacus (strain ATCC 29366 / DSM 635 / J-10-fl).